Consider the following 63-residue polypeptide: 2-hydroxymuconate tautomerase (63 aa).

The active-site Proton acceptor; via imino nitrogen is the Pro2.

Belongs to the 4-oxalocrotonate tautomerase family. Homohexamer.

It carries out the reaction (2Z,4E)-2-hydroxyhexa-2,4-dienedioate = (3E)-2-oxohex-3-enedioate. The protein operates within aromatic compound metabolism; salicylate degradation. Catalyzes the ketonization of 2-hydroxymuconate stereoselectively to yield 2-oxo-3-hexenedioate. In Comamonas testosteroni (Pseudomonas testosteroni), this protein is 2-hydroxymuconate tautomerase (aphI).